We begin with the raw amino-acid sequence, 27 residues long: Secretin (27 aa).

Residue V27 is modified to Valine amide.

This sequence belongs to the glucagon family.

The protein resides in the secreted. In terms of biological role, hormone involved in different processes, such as regulation of the pH of the duodenal content, food intake and water homeostasis. Exerts its biological effects by binding to secretin receptor (SCTR), a G-protein coupled receptor expressed in the basolateral domain of several cells. Acts as a key gastrointestinal hormone by regulating the pH of the duodenal content. Secreted by S cells of the duodenum in the crypts of Lieberkuehn and regulates the pH of the duodenum by (1) inhibiting the secretion of gastric acid from the parietal cells of the stomach and (2) stimulating the production of bicarbonate (NaHCO(3)) from the ductal cells of the pancreas. Production of bicarbonate is essential to neutralize the pH and ensure no damage is done to the small intestine by the gastric acid. In addition to regulating the pH of the duodenal content, plays a central role in diet induced thermogenesis: acts as a non-sympathetic brown fat (BAT) activator mediating prandial thermogenesis, which consequentially induces satiation. Mechanistically, secretin released by the gut after a meal binds to secretin receptor (SCTR) in brown adipocytes, activating brown fat thermogenesis by stimulating lipolysis, which is sensed in the brain and promotes satiation. Also able to stimulate lipolysis in white adipocytes. Also plays an important role in cellular osmoregulation: released into the systemic circulation in response to hyperosmolality and acts at different levels in the hypothalamus, pituitary and kidney to regulate water homeostasis. Also plays a role in the central nervous system, possibly by acting as a neuropeptide hormone: required for hippocampal synaptic function and neural progenitor cells maintenance. The sequence is that of Secretin from Bos taurus (Bovine).